The following is a 507-amino-acid chain: MTKFKLLLAGSLVAIVSMGLLASNINEREKERVALNKTAHSQGIEGKAMSEEWARYYPRQFDSWKKTKESDNITDMLKEKPALVVAWAGYPFSKDYNAPRGHYYALQDNINTLRTGAPVDGKTGPLPSACWTCKSPDVPRIIEQDGELEYFTGKWAKYGDEIVNTIGCYNCHDDKSAELKSKVPYLDRGLSAAGFKTFAESTHQEKRSLVCAQCHVEYYFKKTEWKDDKGVDKTAMVVTLPWSKGISTEQMEAYYDEINFADWTHGISKTPMLKAQHPDWELYKTGIHGQKGVSCADCHMPYTQEGAVKYSDHKVGNPLDNMDKSCMNCHRESEQKLKDIVKQKFERKEFLQDIAFDNIGKAHLETGKAMELGATDAELKEIRTHIRHAQWRADMAIAGHGSFFHAPEEVLRLLASGNEEAQKARIKLVKVLAKYGAIDYVAPDFETKEKAQKLAKVDMEAFIAEKLKFKQTLEQEWKKQAIAKGRLNPESLKGVDEKSSYYDKTKK.

The first 22 residues, 1–22 (MTKFKLLLAGSLVAIVSMGLLA), serve as a signal peptide directing secretion. His102, Cys130, Cys133, Lys134, Cys168, Cys171, His172, Cys211, Cys214, and His215 together coordinate heme c. 4 residues coordinate Ca(2+): Glu217, Tyr218, Lys274, and Gln276. Tyr218 provides a ligand contact to substrate. His277 contacts substrate. The heme c site is built by His288, Cys295, Cys298, His299, His313, Cys326, Cys329, His330, and His405.

This sequence belongs to the cytochrome c-552 family. In terms of assembly, homodimer. Interacts with NrfH. May form a heterotetramer with NrfH. Ca(2+) serves as cofactor. It depends on heme c as a cofactor.

The protein resides in the periplasm. The enzyme catalyses 6 Fe(III)-[cytochrome c] + NH4(+) + 2 H2O = 6 Fe(II)-[cytochrome c] + nitrite + 8 H(+). It functions in the pathway nitrogen metabolism; nitrate reduction (assimilation). Its function is as follows. Catalyzes the reduction of nitrite to ammonia, consuming six electrons in the process. Has very low activity toward hydroxylamine, and even lower activity toward sulfite. Sulfite reductase activity is maximal at neutral pH. The chain is Cytochrome c-552 (nrfA) from Wolinella succinogenes (strain ATCC 29543 / DSM 1740 / CCUG 13145 / JCM 31913 / LMG 7466 / NCTC 11488 / FDC 602W) (Vibrio succinogenes).